The chain runs to 77 residues: RNA-binding protein Hfq (77 aa).

Positions 9–68 (DPFLNALRKEHIPVAIYLVNGIKLQGQIESFDQFVILLKNTVSQMVYKHAISTVVPARAI) constitute a Sm domain.

The protein belongs to the Hfq family. Homohexamer.

RNA chaperone that binds small regulatory RNA (sRNAs) and mRNAs to facilitate mRNA translational regulation in response to envelope stress, environmental stress and changes in metabolite concentrations. Also binds with high specificity to tRNAs. The chain is RNA-binding protein Hfq from Psychromonas ingrahamii (strain DSM 17664 / CCUG 51855 / 37).